Here is a 749-residue protein sequence, read N- to C-terminus: MALPLLPGNSFNRNVGKEKFHKSQHWGFCNNVMMLVSDEKPGIGGEPLLGQKIKPKCSIYPKGDGSDVPSWVAFDKQVLSFDAYLEEEVLDKSQTNYRIRYYKIYFYPEDDTIQVNEPEVKNSGLLQGTSIRRHRITLPPPDEDQFYTVYHFNVGTEVVFYGRTFKIYDCDAFTRNFLRKIGVKVNPPVQCPEDPYMKIRREVVEHVEPLRPYESLDTLKQFLQYHGKILCFFCLWDDSVSMFGDRRELILHYFLCDDTIEIKELLPHSSGRDALKMFLRRSKLPKNCPPRVYQPGQITDRAVLNSYGDFIKNQADGYLFDRYKLGKVDQEFYKDSDLSLGVTINVWGRKVLLYDCDEFTKSYYKSKYGIENFTSVSCKPPSPPPKIERKFPPYNGFGSEEDSLRNCIDLKPTPHRRNFKKFMEKDSYGSKSNILRFFAKLVTDKCVDLDRMFVISYYLGDDTISVFEPIERNSGIAGGMFLKRSRVKKPGQEVFKSELSEYIKAEELYIGVTVNVNGYLFRLLNADEYTLNYMEQNTDKYPFSNLKLALQKLKQEEGKSRELKQVFKAADSKHTNMVDYNTFRDILMSLTVGNLAEQEFVTIARHYRVPEGTCSDMDFLIALAHEKFKKNMFENFDTFIYSCVYEDREKKNVLPTKDIKRLCKSSRLPLSDDLLESLLSRFEDSEKQIDYKSFFSALNWRKNPVPELQPASYLKERCEDVWLGMPSPIPAKYIDYWTFLKDAFGLEEE.

DM10 domains follow at residues D75–G182, H226–Y368, and K431–T538. Residues G558–G593 form the EF-hand domain.

As to quaternary structure, microtubule inner protein component of sperm flagellar doublet microtubules. In terms of tissue distribution, expressed in airway epithelial cells.

The protein resides in the cytoplasm. It localises to the cytoskeleton. It is found in the cilium axoneme. Its subcellular location is the flagellum axoneme. Its function is as follows. Microtubule inner protein (MIP) part of the dynein-decorated doublet microtubules (DMTs) in cilia axoneme, which is required for motile cilia beating. The sequence is that of EF-hand domain-containing family member C2 from Homo sapiens (Human).